We begin with the raw amino-acid sequence, 646 residues long: RNA-binding protein RMD9, mitochondrial (646 aa).

A mitochondrion-targeting transit peptide spans 1–14 (MMLRRNAVRSLKTM). The propeptide at 15–51 (EISVSNVVNSGSIAMLRGKLANVVLSDRTYHSSPIFH) is removed in mature form. A PPR1 repeat occupies 209-238 (VSGYGATHLLTSFKELSFDDDCIRIWEASK). The stretch at 251–282 (EPKVVGFMLPLLYAKTRSLTEPNELYNQIIQS) is one PPR2 repeat. A PPR3 repeat occupies 288–317 (PNLYSGLIKVFIKAEDYEKALSLFGQLCEK). The PPR4 repeat unit spans residues 323–353 (YGYLIETHLSFIGDSKNLTLAESFFDKIIND). A PPR5 repeat occupies 363 to 394 (VSTVNSFLQNIWKAQNDFDHVYRIWEKAVKFY). The stretch at 401–439 (GILSSLNNTFFTIFFENYINDNINGFRKLQEIITFYSGV) is one PPR6 repeat. Residues 444-473 (EPFFNVMLTRASIWHERSIIDFIDKNYTLY) form a PPR7 repeat. Residues 481 to 514 (SYRILLKSLGSIDNTNNEEILDRWLELVKKLNEL) form a PPR8 repeat.

It belongs to the RMD9 family. Monomer. In terms of processing, phosphorylated. Phosphorylation promotes binding to RNA.

Its subcellular location is the mitochondrion inner membrane. Its function is as follows. Binds the RNA motif 5'-AAUAA[U/C]AUUCUU-3' in the 3'-UTR of mitochondrial mRNAs. Involved in the processing or stability of mitochondrial mRNAs. In Saccharomyces cerevisiae (strain ATCC 204508 / S288c) (Baker's yeast), this protein is RNA-binding protein RMD9, mitochondrial.